The following is a 205-amino-acid chain: GTP cyclohydrolase-2 (205 aa).

49–53 (RIHSE) serves as a coordination point for GTP. The Zn(2+) site is built by C54, C65, and C67. GTP is bound by residues Q70, 92-94 (EGR), and T114. The Proton acceptor role is filled by D126. The active-site Nucleophile is R128. 2 residues coordinate GTP: T149 and K154.

The protein belongs to the GTP cyclohydrolase II family. It depends on Zn(2+) as a cofactor.

It catalyses the reaction GTP + 4 H2O = 2,5-diamino-6-hydroxy-4-(5-phosphoribosylamino)-pyrimidine + formate + 2 phosphate + 3 H(+). It participates in cofactor biosynthesis; riboflavin biosynthesis; 5-amino-6-(D-ribitylamino)uracil from GTP: step 1/4. In terms of biological role, catalyzes the conversion of GTP to 2,5-diamino-6-ribosylamino-4(3H)-pyrimidinone 5'-phosphate (DARP), formate and pyrophosphate. This chain is GTP cyclohydrolase-2, found in Shewanella woodyi (strain ATCC 51908 / MS32).